The following is a 274-amino-acid chain: Mitochondrial S-adenosylmethionine carrier protein (274 aa).

Solcar repeat units follow at residues proline 4–leucine 77, phenylalanine 86–leucine 168, and valine 177–leucine 265. The next 6 helical transmembrane spans lie at glycine 5 to phenylalanine 25, isoleucine 49 to leucine 69, histidine 85 to isoleucine 105, arginine 142 to tryptophan 162, serine 182 to valine 202, and phenylalanine 238 to alanine 258.

Belongs to the mitochondrial carrier (TC 2.A.29) family.

It localises to the mitochondrion inner membrane. The enzyme catalyses S-adenosyl-L-homocysteine(out) + S-adenosyl-L-methionine(in) = S-adenosyl-L-homocysteine(in) + S-adenosyl-L-methionine(out). Its function is as follows. Mitochondrial S-adenosyl-L-methionine/S-adenosyl-L-homocysteine antiporter. Mediates the exchange of cytosolic S-adenosyl-L-methionine, the predominant methyl-group donor for macromolecule methylation processes, for mitochondrial S-adenosylhomocysteine(SAH), a by-product of methylation reactions. The chain is Mitochondrial S-adenosylmethionine carrier protein from Mus musculus (Mouse).